The primary structure comprises 447 residues: MTTILKHLPVGQRIGIAFSGGLDTSAALLWMRQKGAVPYAYTANLGQPDEEDYDAIPRRAMEYGAENARLIDCRKQLVAEGIAAIQCGAFHNTTGGLTYFNTTPLGRAVTGTMLVAAMKEDGVNIWGDGSTYKGNDIERFYRYGLLTNAELQIYKPWLDTDFIDELGGRHEMSEFMIACGFDYKMSVEKAYSTDSNMLGATHEAKDLEYLNSSVKIVNPIMGVKFWDESVKIPAEEVTVRFEQGHPVALNGKTFSDDVEMMLEANRIGGRHGLGMSDQIENRIIEAKSRGIYEAPGMALLHIAYERLLTGIHNEDTIEQYHAHGRQLGRLLYQGRWFDSQALMLRDSLQRWVASQITGEVTLELRHGNDYSILNTVSENLTYKPERLTMEKGDSVFSPDDRIGQLTMRNLDITDTREKLFGYAKTGLLSSSAASGVPQMENLENKGQ.

Residues 17-25 (AFSGGLDTS) and Ala43 each bind ATP. Position 99 (Tyr99) interacts with L-citrulline. ATP contacts are provided by Gly129 and Thr131. L-aspartate is bound by residues Thr131, Asn135, and Asp136. Position 135 (Asn135) interacts with L-citrulline. Residue Asp136 participates in ATP binding. Residues Arg139 and Ser192 each contribute to the L-citrulline site. Position 194 (Asp194) interacts with ATP. L-citrulline contacts are provided by Thr201, Glu203, and Glu280.

This sequence belongs to the argininosuccinate synthase family. Type 2 subfamily. As to quaternary structure, homotetramer.

The protein localises to the cytoplasm. The enzyme catalyses L-citrulline + L-aspartate + ATP = 2-(N(omega)-L-arginino)succinate + AMP + diphosphate + H(+). The protein operates within amino-acid biosynthesis; L-arginine biosynthesis; L-arginine from L-ornithine and carbamoyl phosphate: step 2/3. This is Argininosuccinate synthase from Shigella dysenteriae serotype 1 (strain Sd197).